We begin with the raw amino-acid sequence, 743 residues long: Serine/threonine-protein kinase GD17699 (743 aa).

The tract at residues 54 to 78 is disordered; sequence NVQEDNSYNRDCDSPVSSSSEPEKE. Doublecortin domains follow at residues 154 to 240 and 309 to 392; these read LRIK…VEYN and RIVT…AEDF. One can recognise a Protein kinase domain in the interval 473–731; sequence YTLGRIIGDG…SEDILDHPWT (259 aa). Residues 479–487 and Lys502 contribute to the ATP site; that span reads IGDGNFAIV. Catalysis depends on Asp594, which acts as the Proton acceptor.

The protein belongs to the protein kinase superfamily. CAMK Ser/Thr protein kinase family. CaMK subfamily.

It carries out the reaction L-seryl-[protein] + ATP = O-phospho-L-seryl-[protein] + ADP + H(+). The catalysed reaction is L-threonyl-[protein] + ATP = O-phospho-L-threonyl-[protein] + ADP + H(+). This chain is Serine/threonine-protein kinase GD17699, found in Drosophila simulans (Fruit fly).